The following is a 303-amino-acid chain: Elongation factor Ts (303 aa).

Residues 81–84 (TDFV) are involved in Mg(2+) ion dislocation from EF-Tu.

This sequence belongs to the EF-Ts family.

The protein resides in the cytoplasm. In terms of biological role, associates with the EF-Tu.GDP complex and induces the exchange of GDP to GTP. It remains bound to the aminoacyl-tRNA.EF-Tu.GTP complex up to the GTP hydrolysis stage on the ribosome. In Mesomycoplasma hyopneumoniae (strain J / ATCC 25934 / NCTC 10110) (Mycoplasma hyopneumoniae), this protein is Elongation factor Ts.